A 161-amino-acid polypeptide reads, in one-letter code: Nucleotide-binding protein BMASAVP1_A0673 (161 aa).

It belongs to the YajQ family.

Functionally, nucleotide-binding protein. The protein is Nucleotide-binding protein BMASAVP1_A0673 of Burkholderia mallei (strain SAVP1).